The sequence spans 46 residues: MLLPKQKNPFSKLLNFFNDPSAGSPTETLLRLLVPLNDQVCPNSPL.

This is an uncharacterized protein from Saccharomyces cerevisiae (strain ATCC 204508 / S288c) (Baker's yeast).